Consider the following 355-residue polypeptide: 3-dehydroquinate synthase (355 aa).

NAD(+) contacts are provided by residues 69 to 74, 103 to 107, 127 to 128, lysine 140, lysine 149, and 167 to 170; these read DGEQHK, GVIGD, TT, and TLQT. Zn(2+) contacts are provided by glutamate 182, histidine 245, and histidine 262.

This sequence belongs to the sugar phosphate cyclases superfamily. Dehydroquinate synthase family. Co(2+) is required as a cofactor. It depends on Zn(2+) as a cofactor. NAD(+) serves as cofactor.

Its subcellular location is the cytoplasm. It catalyses the reaction 7-phospho-2-dehydro-3-deoxy-D-arabino-heptonate = 3-dehydroquinate + phosphate. It participates in metabolic intermediate biosynthesis; chorismate biosynthesis; chorismate from D-erythrose 4-phosphate and phosphoenolpyruvate: step 2/7. Catalyzes the conversion of 3-deoxy-D-arabino-heptulosonate 7-phosphate (DAHP) to dehydroquinate (DHQ). The chain is 3-dehydroquinate synthase from Pseudoalteromonas atlantica (strain T6c / ATCC BAA-1087).